The primary structure comprises 449 residues: Phosphoglucosamine mutase (449 aa).

Ser-100 functions as the Phosphoserine intermediate in the catalytic mechanism. Residues Ser-100, Asp-241, Asp-243, and Asp-245 each contribute to the Mg(2+) site. At Ser-100 the chain carries Phosphoserine.

This sequence belongs to the phosphohexose mutase family. Mg(2+) serves as cofactor. Activated by phosphorylation.

It catalyses the reaction alpha-D-glucosamine 1-phosphate = D-glucosamine 6-phosphate. Functionally, catalyzes the conversion of glucosamine-6-phosphate to glucosamine-1-phosphate. This is Phosphoglucosamine mutase from Clostridium botulinum (strain Loch Maree / Type A3).